The primary structure comprises 595 residues: Protein alan shepard (595 aa).

Residues 1–12 (MHPRYSPAPPPH) are compositionally biased toward pro residues. The interval 1 to 82 (MHPRYSPAPP…ASVAAAPPTP (82 aa)) is disordered. Tyrosine 5 bears the Phosphotyrosine mark. Over residues 13–31 (QQQQQQQQQPMGGPHQQQS) the composition is skewed to low complexity. Positions 32 to 43 (AGGGPGHGGGAS) are enriched in gly residues. Residues 50 to 68 (PNSQQLPPQMPRSQNYANG) show a composition bias toward polar residues. The segment covering 69–78 (SSSAASVAAA) has biased composition (low complexity). Residues tyrosine 138 and tyrosine 154 each carry the phosphotyrosine modification. The interval 184–238 (RVPTAASPSNTNSSSSSNTGSQSGTLSTSLSNTTNTNTTMGPNGTAQNQNQQGGE) is disordered. A compositionally biased stretch (low complexity) spans 190 to 238 (SPSNTNSSSSSNTGSQSGTLSTSLSNTTNTNTTMGPNGTAQNQNQQGGE). RRM domains are found at residues 243–316 (TNLY…MAKQ) and 322–401 (TNLY…FADG). The disordered stretch occupies residues 569 to 595 (MTDSEQASTAASPDEAYTQYPHQAAPK).

Has a role in the perception of gravity. The polypeptide is Protein alan shepard (Drosophila virilis (Fruit fly)).